The following is a 457-amino-acid chain: UDP-N-acetylmuramoylalanine--D-glutamate ligase (457 aa).

Position 117-123 (117-123 (GTNGKST)) interacts with ATP.

Belongs to the MurCDEF family.

The protein localises to the cytoplasm. It catalyses the reaction UDP-N-acetyl-alpha-D-muramoyl-L-alanine + D-glutamate + ATP = UDP-N-acetyl-alpha-D-muramoyl-L-alanyl-D-glutamate + ADP + phosphate + H(+). It participates in cell wall biogenesis; peptidoglycan biosynthesis. Cell wall formation. Catalyzes the addition of glutamate to the nucleotide precursor UDP-N-acetylmuramoyl-L-alanine (UMA). This chain is UDP-N-acetylmuramoylalanine--D-glutamate ligase, found in Paramagnetospirillum magneticum (strain ATCC 700264 / AMB-1) (Magnetospirillum magneticum).